Consider the following 696-residue polypeptide: Glycine--tRNA ligase beta subunit (696 aa).

It belongs to the class-II aminoacyl-tRNA synthetase family. As to quaternary structure, tetramer of two alpha and two beta subunits.

Its subcellular location is the cytoplasm. It carries out the reaction tRNA(Gly) + glycine + ATP = glycyl-tRNA(Gly) + AMP + diphosphate. The sequence is that of Glycine--tRNA ligase beta subunit from Aromatoleum aromaticum (strain DSM 19018 / LMG 30748 / EbN1) (Azoarcus sp. (strain EbN1)).